A 164-amino-acid chain; its full sequence is Phosphopantetheine adenylyltransferase (164 aa).

Serine 9 lines the substrate pocket. Residues 9–10 (SF) and histidine 17 contribute to the ATP site. Lysine 41, leucine 73, and arginine 87 together coordinate substrate. ATP-binding positions include glutamate 98 and 122-128 (YSFLSSS).

This sequence belongs to the bacterial CoaD family. Homohexamer. It depends on Mg(2+) as a cofactor.

It is found in the cytoplasm. It catalyses the reaction (R)-4'-phosphopantetheine + ATP + H(+) = 3'-dephospho-CoA + diphosphate. It functions in the pathway cofactor biosynthesis; coenzyme A biosynthesis; CoA from (R)-pantothenate: step 4/5. In terms of biological role, reversibly transfers an adenylyl group from ATP to 4'-phosphopantetheine, yielding dephospho-CoA (dPCoA) and pyrophosphate. This chain is Phosphopantetheine adenylyltransferase, found in Thermobifida fusca (strain YX).